Here is a 785-residue protein sequence, read N- to C-terminus: MSTTGHRAGVFKKPSKPHKSWKGKRTKGEITSENRGREGVKQLTRSAHSTHRTISKDARRNQLKMARDQKMADAMERRRTSNAPCLVTVVSLGVGARPTEFIKKLATCDETIIQTTSPSTIDFAIPRFKSRVSFLTPDKDNVDGVLDAIRASDVLCFLWPMSAELSEWDEQLLTIIKANGLPTIVSVVPGLGSIANHKKKEDVRKGIEFIISKWSMSNAGVMPADSVTDNLQLLRILNETKKKPLTLQARHSYMLVENLECSDKTGETCTLVAQGYLRGPEWNANNLVHLPGFGDFQISKIESTVDPHPLKAHNKTPEAQIIAKSDDKRQNTETEITPDSMDGEQTWPTREELEEADKELRRVPKGTSSYQAAWILDDEDDEDEEDSDEDMDDSDNEEVEDDSEEEEPMDDLKSEAGETTASEMMFDDGIDEDINMAEVEKYRKERENAQWPDEVDTPMDMPARIAFQKYRGLKSFRTSTWDPKENLPLDYARIFQFANYRNTKKNVMSKIGGNDVDADSVADKKFNGAFASVFIENVPVAVLEAYKDAKNLVLFQLLPHEHKMSVLNMVLKKHPSCTIPITSDQNQKFIFYVGFRQFEANAVFSSNTPGDKFKLERFMPTEKTFVATVYAPITFNPATVLCFRQDDKGRQELVATGSILDSNPDRIVLKRTVLAGHPYKINRRAVVVRYMFFNREDIEWFKPVELYTPSGRRGHIKEAVGTHGNMKCRFDQQLNAQDSVMLNLYKRVFPVWNYSIFNRSLNPSRFVERSRVESISLVNEDAMEE.

Residues 1 to 59 (MSTTGHRAGVFKKPSKPHKSWKGKRTKGEITSENRGREGVKQLTRSAHSTHRTISKDAR) form a disordered region. The segment covering 9–25 (GVFKKPSKPHKSWKGKR) has biased composition (basic residues). The span at 26–40 (TKGEITSENRGREGV) shows a compositional bias: basic and acidic residues. Residues 83 to 243 (APCLVTVVSL…LRILNETKKK (161 aa)) enclose the Bms1-type G domain. The tract at residues 307-426 (PHPLKAHNKT…GETTASEMMF (120 aa)) is disordered. Acidic residues predominate over residues 376–409 (LDDEDDEDEEDSDEDMDDSDNEEVEDDSEEEEPM).

This sequence belongs to the TRAFAC class translation factor GTPase superfamily. Bms1-like GTPase family. TSR1 subfamily.

The protein resides in the nucleus. It is found in the nucleolus. Required during maturation of the 40S ribosomal subunit in the nucleolus. This is Pre-rRNA-processing protein TSR1 homolog (tag-151) from Caenorhabditis elegans.